Consider the following 46-residue polypeptide: Short transmembrane mitochondrial protein 1 (46 aa).

Residues 7-23 (GFTLGNVVGMYLAQNYE) traverse the membrane as a helical segment.

Belongs to the STMP1 family. Widely expressed. Expressed more abundantly in brain compared with other tissues such as heart, muscle and liver.

It is found in the mitochondrion inner membrane. It localises to the mitochondrion outer membrane. The protein localises to the mitochondrion intermembrane space. Functionally, microprotein involved in mitochondrial respiratory chain complex III (ubiquinol-cytochrome c oxidoreductase) and complex IV (mitochondrial cytochrome c oxidase complex) assembly. Required for the formation of mitochondrial supercomplexes (SCs). Also required for the activation of the NLRP3 inflammasome. This Danio rerio (Zebrafish) protein is Short transmembrane mitochondrial protein 1.